A 377-amino-acid chain; its full sequence is Glycine oxidase (377 aa).

FAD is bound by residues V14–I15, E34–K35, A42–S43, A47–M49, and V180. Residues R309 and R336 each contribute to the substrate site. H334 to L340 contacts FAD.

The protein belongs to the DAO family. ThiO subfamily. As to quaternary structure, homotetramer. FAD serves as cofactor.

The catalysed reaction is glycine + O2 + H2O = glyoxylate + H2O2 + NH4(+). The enzyme catalyses N-ethylglycine + O2 + H2O = ethylamine + glyoxylate + H2O2. It catalyses the reaction sarcosine + O2 + H2O = methylamine + glyoxylate + H2O2. It carries out the reaction D-alanine + O2 + H2O = pyruvate + H2O2 + NH4(+). It participates in cofactor biosynthesis; thiamine diphosphate biosynthesis. Its activity is regulated as follows. Is inhibited at high substrate concentration. Functionally, catalyzes the FAD-dependent oxidative deamination of various amines and D-amino acids to yield the corresponding alpha-keto acids, ammonia/amine, and hydrogen peroxide. Oxidizes glycine, sarcosine (N-methylglycine), N-ethylglycine, D-proline, D-alanine, glycine-ethyl ester, and some other D-amino acids. Does not act on L-proline. Is essential for thiamine biosynthesis since the oxidation of glycine catalyzed by ThiO generates the glycine imine intermediate (dehydroglycine) required for the biosynthesis of the thiazole ring of thiamine pyrophosphate. This chain is Glycine oxidase, found in Geobacillus kaustophilus (strain HTA426).